The chain runs to 101 residues: Small ribosomal subunit protein uS14 (101 aa).

This sequence belongs to the universal ribosomal protein uS14 family. In terms of assembly, part of the 30S ribosomal subunit. Contacts proteins S3 and S10.

Its function is as follows. Binds 16S rRNA, required for the assembly of 30S particles and may also be responsible for determining the conformation of the 16S rRNA at the A site. This Pelagibacter ubique (strain HTCC1062) protein is Small ribosomal subunit protein uS14.